The primary structure comprises 516 residues: Flavin-dependent halogenase armH2 (516 aa).

Residues Gly16, Ala19, and Glu49 each coordinate FAD. Chloride contacts are provided by Ser328 and Gly329. Ile330 contacts FAD. Residues 440–475 (PQANGNGAAKQDAVPAPIPVALSSGAGPEKDAKRRE) are disordered.

This sequence belongs to the flavin-dependent halogenase family.

It carries out the reaction melleolide F + FADH2 + chloride + O2 = 6'-chloromelleolide F + FAD + 2 H2O + H(+). Its function is as follows. Flavin-dependent halogenase involved in the biosynthesis of melleolides, a range of antifungal and phytotoxic polyketide derivatives composed of an orsellinic acid (OA) moiety esterified to various sesquiterpene alcohols. The halogenase catalyzes the transfer of a single chlorine atom to the melleolide backbone, resulting in a 6'-chloromelleolide product. The enzyme acts on free substrate and does not depend on carrier-protein-dependent acceptor molecules. The chain is Flavin-dependent halogenase armH2 from Armillaria mellea (Honey mushroom).